Here is a 427-residue protein sequence, read N- to C-terminus: Histidinol dehydrogenase (427 aa).

Positions 125, 186, and 209 each coordinate NAD(+). Positions 234, 256, and 259 each coordinate substrate. Zn(2+)-binding residues include glutamine 256 and histidine 259. Catalysis depends on proton acceptor residues glutamate 325 and histidine 326. 4 residues coordinate substrate: histidine 326, aspartate 359, glutamate 413, and histidine 419. Residue aspartate 359 coordinates Zn(2+). Histidine 419 contributes to the Zn(2+) binding site.

This sequence belongs to the histidinol dehydrogenase family. The cofactor is Zn(2+).

It catalyses the reaction L-histidinol + 2 NAD(+) + H2O = L-histidine + 2 NADH + 3 H(+). It participates in amino-acid biosynthesis; L-histidine biosynthesis; L-histidine from 5-phospho-alpha-D-ribose 1-diphosphate: step 9/9. Its function is as follows. Catalyzes the sequential NAD-dependent oxidations of L-histidinol to L-histidinaldehyde and then to L-histidine. This is Histidinol dehydrogenase from Leptospira interrogans serogroup Icterohaemorrhagiae serovar copenhageni (strain Fiocruz L1-130).